The chain runs to 327 residues: Ribose operon repressor (327 aa).

In terms of domain architecture, HTH lacI-type spans 1-56 (MTTIKQVALEAGVSKSTVSRFIAQNGYVSDEAREKIERAIKKLNFRPNLSAQSLKT). The H-T-H motif DNA-binding region spans 4–23 (IKQVALEAGVSKSTVSRFIA).

Functionally, transcriptional repressor for the ribose rbsDACBK operon. This is Ribose operon repressor (rbsR) from Lactococcus lactis subsp. lactis (strain IL1403) (Streptococcus lactis).